The chain runs to 309 residues: Probable 2,4-dienoyl-CoA reductase decr-1.2 [(3E)-enoyl-CoA-producing] (309 aa).

Residues Val-28–Glu-60, Gly-32–Ile-37, Arg-57, and Asp-83 each bind NADP(+). Residue Arg-57 participates in substrate binding. Phe-116 and Ser-124 together coordinate substrate. The Proton acceptor role is filled by Tyr-166. NADP(+)-binding positions include Lys-181 and Pro-207 to Ile-210. Residue Arg-218 coordinates substrate.

The protein belongs to the short-chain dehydrogenases/reductases (SDR) family. 2,4-dienoyl-CoA reductase subfamily.

The enzyme catalyses a (2E,4E)-dienoyl-CoA + NADPH + H(+) = a 4,5-saturated-(3E)-enoyl-CoA + NADP(+). The catalysed reaction is a (2E,4Z)-dienoyl-CoA + NADPH + H(+) = a 4,5-saturated-(3E)-enoyl-CoA + NADP(+). Functionally, auxiliary enzyme of beta-oxidation. It participates in the metabolism of unsaturated fatty enoyl-CoA esters having double bonds in both even- and odd-numbered positions. Catalyzes the NADP-dependent reduction of 2,4-dienoyl-CoA to yield trans-3-enoyl-CoA. This Caenorhabditis elegans protein is Probable 2,4-dienoyl-CoA reductase decr-1.2 [(3E)-enoyl-CoA-producing].